The sequence spans 126 residues: Probable DNA-directed RNA polymerase II subunit RPB11 (126 aa).

This sequence belongs to the archaeal Rpo11/eukaryotic RPB11/RPC19 RNA polymerase subunit family. In terms of assembly, component of the RNA polymerase II (Pol II) complex consisting of 12 subunits.

It is found in the nucleus. DNA-dependent RNA polymerase catalyzes the transcription of DNA into RNA using the four ribonucleoside triphosphates as substrates. Component of RNA polymerase II which synthesizes mRNA precursors and many functional non-coding RNAs. Pol II is the central component of the basal RNA polymerase II transcription machinery. It is composed of mobile elements that move relative to each other. RPB11 is part of the core element with the central large cleft. The sequence is that of Probable DNA-directed RNA polymerase II subunit RPB11 from Plasmodium falciparum (isolate 3D7).